Reading from the N-terminus, the 396-residue chain is L-cysteine desulfidase (396 aa).

The Proton acceptor role is filled by C23. [4Fe-4S] cluster is bound by residues C287, C329, and C336.

The protein belongs to the L-cysteine desulfidase family. In terms of assembly, homotrimer. The cofactor is [4Fe-4S] cluster.

It catalyses the reaction L-cysteine + H2O = hydrogen sulfide + pyruvate + NH4(+) + H(+). Functionally, catalyzes the cleavage of L-cysteine to form 2-aminoprop-2-enoate and sulfide. The former then spontaneously hydrolyzes to pyruvate and NH(3). May be responsible for the production of sulfide required for the biosynthesis of iron-sulfur centers in this archaea. The chain is L-cysteine desulfidase from Methanococcus maripaludis (strain DSM 14266 / JCM 13030 / NBRC 101832 / S2 / LL).